We begin with the raw amino-acid sequence, 379 residues long: MSELSFDAPVWHHGKALRKGYTTGSCATAAAKVAALMVLRQHLIHQVSIVTPSGVTLCLNVESPHIEGQQAIAAIRKDGGDDVDATHGMLIFARVTLNDSGEITLTGGEGIGTVTRKGVGLPLGSAAINRTPRHTIESAVREAIGPARGADVEIFAPEGEARAQKTYNSRLGILGGISIIGTTGIVTPMSEESWKRSLSLELEIKRASGLTRVILVPGNHGERFVREQMGVDTQAVVTMSNFVGYMIEEAVRLGFCQIVLVGHPGKLIKIAAGIFHTHSHIADARMETLVAHLALLGAPLELLTLVSDCDTTEAAMEHIEAYGFGHIYNHLARRICLRVMQMLRFTKTPPVCDAILFSFDNHILGSNRPVDEIAKELQC.

It belongs to the CbiD family.

It catalyses the reaction Co-precorrin-5B + S-adenosyl-L-methionine = Co-precorrin-6A + S-adenosyl-L-homocysteine. It participates in cofactor biosynthesis; adenosylcobalamin biosynthesis; cob(II)yrinate a,c-diamide from sirohydrochlorin (anaerobic route): step 6/10. In terms of biological role, catalyzes the methylation of C-1 in cobalt-precorrin-5B to form cobalt-precorrin-6A. This is Cobalt-precorrin-5B C(1)-methyltransferase from Salmonella schwarzengrund (strain CVM19633).